The primary structure comprises 687 residues: Glycine--tRNA ligase beta subunit (687 aa).

This sequence belongs to the class-II aminoacyl-tRNA synthetase family. In terms of assembly, tetramer of two alpha and two beta subunits.

It is found in the cytoplasm. It carries out the reaction tRNA(Gly) + glycine + ATP = glycyl-tRNA(Gly) + AMP + diphosphate. This is Glycine--tRNA ligase beta subunit from Geotalea daltonii (strain DSM 22248 / JCM 15807 / FRC-32) (Geobacter daltonii).